Reading from the N-terminus, the 203-residue chain is Signal peptidase I (203 aa).

Residues Met1–Ser26 form a disordered region. Residues Met1–Lys33 are Cytoplasmic-facing. Residues Pro17–Ser26 show a composition bias toward low complexity. The chain crosses the membrane as a helical span at residues Thr34–Ala50. Residues Glu51 to Tyr203 lie on the Extracellular side of the membrane. Residues Ser59 and Lys109 contribute to the active site.

It belongs to the peptidase S26 family.

The protein resides in the cell membrane. It carries out the reaction Cleavage of hydrophobic, N-terminal signal or leader sequences from secreted and periplasmic proteins.. In Leptolyngbya laminosa (Phormidium laminosum), this protein is Signal peptidase I (lepB).